Reading from the N-terminus, the 397-residue chain is Chorismate synthase (397 aa).

Positions 40 and 46 each coordinate NADP(+). Residues 129–131 (RSS), 257–258 (QA), glycine 302, 317–321 (KPISS), and arginine 343 contribute to the FMN site.

It belongs to the chorismate synthase family. Homotetramer. Requires FMNH2 as cofactor.

The catalysed reaction is 5-O-(1-carboxyvinyl)-3-phosphoshikimate = chorismate + phosphate. It participates in metabolic intermediate biosynthesis; chorismate biosynthesis; chorismate from D-erythrose 4-phosphate and phosphoenolpyruvate: step 7/7. In terms of biological role, catalyzes the anti-1,4-elimination of the C-3 phosphate and the C-6 proR hydrogen from 5-enolpyruvylshikimate-3-phosphate (EPSP) to yield chorismate, which is the branch point compound that serves as the starting substrate for the three terminal pathways of aromatic amino acid biosynthesis. This reaction introduces a second double bond into the aromatic ring system. This Chlorobium limicola (strain DSM 245 / NBRC 103803 / 6330) protein is Chorismate synthase.